The primary structure comprises 265 residues: Imidazole glycerol phosphate synthase subunit HisF (265 aa).

Active-site residues include Asp-17 and Asp-136.

The protein belongs to the HisA/HisF family. In terms of assembly, heterodimer of HisH and HisF.

The protein localises to the cytoplasm. It catalyses the reaction 5-[(5-phospho-1-deoxy-D-ribulos-1-ylimino)methylamino]-1-(5-phospho-beta-D-ribosyl)imidazole-4-carboxamide + L-glutamine = D-erythro-1-(imidazol-4-yl)glycerol 3-phosphate + 5-amino-1-(5-phospho-beta-D-ribosyl)imidazole-4-carboxamide + L-glutamate + H(+). It functions in the pathway amino-acid biosynthesis; L-histidine biosynthesis; L-histidine from 5-phospho-alpha-D-ribose 1-diphosphate: step 5/9. IGPS catalyzes the conversion of PRFAR and glutamine to IGP, AICAR and glutamate. The HisF subunit catalyzes the cyclization activity that produces IGP and AICAR from PRFAR using the ammonia provided by the HisH subunit. The sequence is that of Imidazole glycerol phosphate synthase subunit HisF from Mycolicibacterium paratuberculosis (strain ATCC BAA-968 / K-10) (Mycobacterium paratuberculosis).